The sequence spans 225 residues: PKHD-type hydroxylase YbiX (225 aa).

Residues 78-177 (TLSTPLFNRY…RVASFMWIQS (100 aa)) enclose the Fe2OG dioxygenase domain. His-96, Asp-98, and His-158 together coordinate Fe cation. A 2-oxoglutarate-binding site is contributed by Arg-168.

Requires Fe(2+) as cofactor. The cofactor is L-ascorbate.

This Escherichia coli O45:K1 (strain S88 / ExPEC) protein is PKHD-type hydroxylase YbiX.